The chain runs to 269 residues: 1-(5-phosphoribosyl)-5-[(5-phosphoribosylamino)methylideneamino] imidazole-4-carboxamide isomerase (269 aa).

The active-site Proton acceptor is Asp-10. Asp-132 functions as the Proton donor in the catalytic mechanism.

It belongs to the HisA/HisF family.

It is found in the cytoplasm. The catalysed reaction is 1-(5-phospho-beta-D-ribosyl)-5-[(5-phospho-beta-D-ribosylamino)methylideneamino]imidazole-4-carboxamide = 5-[(5-phospho-1-deoxy-D-ribulos-1-ylimino)methylamino]-1-(5-phospho-beta-D-ribosyl)imidazole-4-carboxamide. It participates in amino-acid biosynthesis; L-histidine biosynthesis; L-histidine from 5-phospho-alpha-D-ribose 1-diphosphate: step 4/9. This chain is 1-(5-phosphoribosyl)-5-[(5-phosphoribosylamino)methylideneamino] imidazole-4-carboxamide isomerase, found in Xylella fastidiosa (strain M12).